The sequence spans 530 residues: Ubiquitin carboxyl-terminal hydrolase 17-like protein 21 (530 aa).

Residues 80–375 form the USP domain; it reads AGLQNMGNTC…QAYVLFYIQK (296 aa). Cysteine 89 (nucleophile) is an active-site residue. Histidine 334 serves as the catalytic Proton acceptor. Composition is skewed to basic and acidic residues over residues 382–392 and 398–412; these read SESVSRGREPR and DTDRRATQGELKRDH. 2 disordered regions span residues 382 to 412 and 477 to 530; these read SESVSRGREPRALGAEDTDRRATQGELKRDH and NHHP…LVCQ. Over residues 493–505 the composition is skewed to polar residues; it reads TPTHQESMNTGTL. The span at 510–524 shows a compositional bias: basic residues; it reads GRARRSKGKNKHSKR.

Belongs to the peptidase C19 family. USP17 subfamily.

It localises to the nucleus. Its subcellular location is the endoplasmic reticulum. The catalysed reaction is Thiol-dependent hydrolysis of ester, thioester, amide, peptide and isopeptide bonds formed by the C-terminal Gly of ubiquitin (a 76-residue protein attached to proteins as an intracellular targeting signal).. Deubiquitinating enzyme that removes conjugated ubiquitin from specific proteins to regulate different cellular processes that may include cell proliferation, progression through the cell cycle, apoptosis, cell migration, and the cellular response to viral infection. This is Ubiquitin carboxyl-terminal hydrolase 17-like protein 21 (USP17L21) from Homo sapiens (Human).